Reading from the N-terminus, the 248-residue chain is MQPLQSAGYDRAITVFSPDGRLFQVEYAREAVKRGTTSLGVKSKEGIVLVVDKRPTSKLVEPKSIEKIFQIDEHIGAATSGLVADARAIIEKARLEAQINRITYNEPIRVESLAKKICDMKQMYTQHGGVRPFGTALIIGGVNGRGCRLFETDPSGALIEYKATAIGAGRPAAMEEFEKKYSDDMNLNQAIELALDAVYEATEGKTTPESVEIAVIEAADKKYRRLPDDEIRDHVEELLIRKEKEEEE.

It belongs to the peptidase T1A family. The 20S proteasome core is composed of 14 alpha and 14 beta subunits that assemble into four stacked heptameric rings, resulting in a barrel-shaped structure. The two inner rings, each composed of seven catalytic beta subunits, are sandwiched by two outer rings, each composed of seven alpha subunits. The catalytic chamber with the active sites is on the inside of the barrel. Has a gated structure, the ends of the cylinder being occluded by the N-termini of the alpha-subunits. Is capped at one or both ends by the proteasome regulatory ATPase, PAN.

The protein resides in the cytoplasm. Its activity is regulated as follows. The formation of the proteasomal ATPase PAN-20S proteasome complex, via the docking of the C-termini of PAN into the intersubunit pockets in the alpha-rings, triggers opening of the gate for substrate entry. Interconversion between the open-gate and close-gate conformations leads to a dynamic regulation of the 20S proteasome proteolysis activity. In terms of biological role, component of the proteasome core, a large protease complex with broad specificity involved in protein degradation. The chain is Proteasome subunit alpha from Methanothermobacter thermautotrophicus (strain ATCC 29096 / DSM 1053 / JCM 10044 / NBRC 100330 / Delta H) (Methanobacterium thermoautotrophicum).